Reading from the N-terminus, the 240-residue chain is Methylthioribulose-1-phosphate dehydratase (240 aa).

Residue Cys99 coordinates substrate. Zn(2+) is bound by residues His116 and His118. The active-site Proton donor/acceptor is the Glu145. His201 serves as a coordination point for Zn(2+).

Belongs to the aldolase class II family. MtnB subfamily. Zn(2+) serves as cofactor.

The protein localises to the cytoplasm. The catalysed reaction is 5-(methylsulfanyl)-D-ribulose 1-phosphate = 5-methylsulfanyl-2,3-dioxopentyl phosphate + H2O. It participates in amino-acid biosynthesis; L-methionine biosynthesis via salvage pathway; L-methionine from S-methyl-5-thio-alpha-D-ribose 1-phosphate: step 2/6. Functionally, catalyzes the dehydration of methylthioribulose-1-phosphate (MTRu-1-P) into 2,3-diketo-5-methylthiopentyl-1-phosphate (DK-MTP-1-P). This is Methylthioribulose-1-phosphate dehydratase from Ajellomyces capsulatus (strain G186AR / H82 / ATCC MYA-2454 / RMSCC 2432) (Darling's disease fungus).